A 366-amino-acid chain; its full sequence is Chorismate synthase (366 aa).

Arginine 48 and arginine 54 together coordinate NADP(+). FMN-binding positions include 125 to 127 (RSS), 238 to 239 (NA), glycine 278, 293 to 297 (KPTSS), and arginine 319.

It belongs to the chorismate synthase family. Homotetramer. Requires FMNH2 as cofactor.

It carries out the reaction 5-O-(1-carboxyvinyl)-3-phosphoshikimate = chorismate + phosphate. The protein operates within metabolic intermediate biosynthesis; chorismate biosynthesis; chorismate from D-erythrose 4-phosphate and phosphoenolpyruvate: step 7/7. Functionally, catalyzes the anti-1,4-elimination of the C-3 phosphate and the C-6 proR hydrogen from 5-enolpyruvylshikimate-3-phosphate (EPSP) to yield chorismate, which is the branch point compound that serves as the starting substrate for the three terminal pathways of aromatic amino acid biosynthesis. This reaction introduces a second double bond into the aromatic ring system. This chain is Chorismate synthase, found in Burkholderia multivorans (strain ATCC 17616 / 249).